We begin with the raw amino-acid sequence, 354 residues long: UPF0421 protein BH2644 (354 aa).

The next 4 helical transmembrane spans lie at 22 to 42, 60 to 80, 107 to 127, and 133 to 153; these read AVCL…FAVI, LIRL…AYFF, TLVA…HLFA, and VAGT…ILPP.

Belongs to the UPF0421 family.

The protein resides in the cell membrane. The protein is UPF0421 protein BH2644 of Halalkalibacterium halodurans (strain ATCC BAA-125 / DSM 18197 / FERM 7344 / JCM 9153 / C-125) (Bacillus halodurans).